A 296-amino-acid polypeptide reads, in one-letter code: ATP synthase gamma chain (296 aa).

The segment at 194-216 is disordered; sequence IPASAGQAANDNAGSDQPAGDYE.

The protein belongs to the ATPase gamma chain family. F-type ATPases have 2 components, CF(1) - the catalytic core - and CF(0) - the membrane proton channel. CF(1) has five subunits: alpha(3), beta(3), gamma(1), delta(1), epsilon(1). CF(0) has three main subunits: a, b and c.

Its subcellular location is the cell inner membrane. Functionally, produces ATP from ADP in the presence of a proton gradient across the membrane. The gamma chain is believed to be important in regulating ATPase activity and the flow of protons through the CF(0) complex. This chain is ATP synthase gamma chain, found in Acidiphilium cryptum (strain JF-5).